The chain runs to 320 residues: NADH-ubiquinone oxidoreductase chain 1 (320 aa).

Transmembrane regions (helical) follow at residues 3–23 (LITIINPLTYIVPILIAVAFL), 72–92 (ILLILSPVLALTMAMLIWTPI), 103–123 (LGFLSILAISSMAVNSILWAG), 147–167 (VTLGIILLSILILTGGFTMQL), 174–194 (HIWLLATSWPLMMMWFISTLA), 226–246 (FFLAEYANIISMNLLTCILFI), 255–275 (ELFLINLITKTMILTLTFLWI), and 295–315 (FLPLTMALCLLHVSLLISISG).

The protein belongs to the complex I subunit 1 family.

It is found in the mitochondrion inner membrane. It catalyses the reaction a ubiquinone + NADH + 5 H(+)(in) = a ubiquinol + NAD(+) + 4 H(+)(out). Functionally, core subunit of the mitochondrial membrane respiratory chain NADH dehydrogenase (Complex I) that is believed to belong to the minimal assembly required for catalysis. Complex I functions in the transfer of electrons from NADH to the respiratory chain. The immediate electron acceptor for the enzyme is believed to be ubiquinone. In Varanus jobiensis (Peach throat monitor), this protein is NADH-ubiquinone oxidoreductase chain 1 (MT-ND1).